Consider the following 200-residue polypeptide: Nitrile hydratase subunit alpha (200 aa).

Residues Cys-105, Cys-108, Ser-109, and Cys-110 each coordinate Fe(3+). Residue Cys-108 is modified to Cysteine sulfinic acid (-SO2H). Position 110 is a cysteine sulfenic acid (-SOH) (Cys-110).

It belongs to the nitrile hydratase subunit alpha family. Heterodimer of an alpha and a beta chain. It depends on Fe(3+) as a cofactor. In terms of processing, oxidation on Cys-108 is essential for the activity. Post-translationally, oxidation on Cys-110 stabilizes the Fe-NO ligand coordinated in the inactive form.

It catalyses the reaction an aliphatic primary amide = an aliphatic nitrile + H2O. Inactivated by oxidation of Cys-110 to a sulfenic acid. Functionally, NHase catalyzes the hydration of various nitrile compounds to the corresponding amides. Industrial production of acrylamide is now being developed using some of the enzymes of this class. The sequence is that of Nitrile hydratase subunit alpha (nthA) from Pseudomonas chlororaphis (Pseudomonas aureofaciens).